Consider the following 383-residue polypeptide: tRNA-specific 2-thiouridylase MnmA (383 aa).

Residues 30-37 and M56 contribute to the ATP site; that span reads GMSGGVDS. Residues 116-118 are interaction with target base in tRNA; that stretch reads NPD. C121 functions as the Nucleophile in the catalytic mechanism. A disulfide bridge links C121 with C218. An ATP-binding site is contributed by G146. The interval 168-170 is interaction with tRNA; sequence KDQ. The Cysteine persulfide intermediate role is filled by C218. The interaction with tRNA stretch occupies residues 330–331; it reads RY.

It belongs to the MnmA/TRMU family.

The protein resides in the cytoplasm. It carries out the reaction S-sulfanyl-L-cysteinyl-[protein] + uridine(34) in tRNA + AH2 + ATP = 2-thiouridine(34) in tRNA + L-cysteinyl-[protein] + A + AMP + diphosphate + H(+). Functionally, catalyzes the 2-thiolation of uridine at the wobble position (U34) of tRNA, leading to the formation of s(2)U34. The protein is tRNA-specific 2-thiouridylase MnmA of Haemophilus influenzae (strain 86-028NP).